A 161-amino-acid chain; its full sequence is Ribonuclease P protein component 2 (161 aa).

It belongs to the eukaryotic/archaeal RNase P protein component 2 family. In terms of assembly, consists of a catalytic RNA component and at least 4-5 protein subunits.

It is found in the cytoplasm. It catalyses the reaction Endonucleolytic cleavage of RNA, removing 5'-extranucleotides from tRNA precursor.. Part of ribonuclease P, a protein complex that generates mature tRNA molecules by cleaving their 5'-ends. The polypeptide is Ribonuclease P protein component 2 (Natronomonas pharaonis (strain ATCC 35678 / DSM 2160 / CIP 103997 / JCM 8858 / NBRC 14720 / NCIMB 2260 / Gabara) (Halobacterium pharaonis)).